The primary structure comprises 895 residues: Androgen receptor (895 aa).

Residues 1-533 (MEVQLGLGRV…PIDYYFPPQK (533 aa)) form a modulating region. Residues 1–562 (MEVQLGLGRV…GSCKVFFKRA (562 aa)) are interaction with ZNF318. Disordered regions lie at residues 33 to 150 (VIQN…LSLL) and 175 to 211 (QLLQ…YLGG). 2 stretches are compositionally biased toward low complexity: residues 44-81 (AASA…GSPQ) and 175-200 (QLLQ…ASGA). Residue Ser65 is modified to Phosphoserine; by CDK9. Ser79 is modified (phosphoserine). Polar residues predominate over residues 201 to 211 (PTSSKDNYLGG). Tyr208 is modified (phosphotyrosine; by CSK). Ser241 bears the Phosphoserine mark. Tyr252 carries the post-translational modification Phosphotyrosine; by CSK and TNK2. Phosphotyrosine; by CSK is present on residues Tyr292, Tyr331, Tyr342, and Tyr347. Tyr348 is subject to Phosphotyrosine; by CSK and TNK2. A Glycyl lysine isopeptide (Lys-Gly) (interchain with G-Cter in SUMO) cross-link involves residue Lys371. Phosphotyrosine; by CSK is present on Tyr378. A Glycyl lysine isopeptide (Lys-Gly) (interchain with G-Cter in SUMO) cross-link involves residue Lys496. Residues Tyr510 and Tyr527 each carry the phosphotyrosine; by CSK modification. The tract at residues 527–894 (YYFPPQKTCL…GKVKPIYFHT (368 aa)) is interaction with LPXN. The segment at residues 534-607 (TCLICGDEAS…AGMTLGARKL (74 aa)) is a DNA-binding region (nuclear receptor). 2 NR C4-type zinc fingers span residues 535–555 (CLIC…CGSC) and 571–595 (CASR…LRKC). The segment at 547–637 (YGALTCGSCK…TEETAQKLTV (91 aa)) is interaction with HIPK3. The tract at residues 567 to 894 (QKYLCASRND…GKVKPIYFHT (328 aa)) is interaction with CCAR1. The segment at 600-894 (MTLGARKLKK…GKVKPIYFHT (295 aa)) is interaction with KAT7. A Phosphoserine; by STK4/MST1 modification is found at Ser626. The 232-residue stretch at 644–875 (ECQPIFLNVL…DFPEMMAEII (232 aa)) folds into the NR LBD domain. Residues Asn681 and Arg728 each contribute to the 17beta-hydroxy-5alpha-androstan-3-one site. Glycyl lysine isopeptide (Lys-Gly) (interchain with G-Cter in ubiquitin) cross-links involve residues Lys821 and Lys823. Residue Thr853 coordinates 17beta-hydroxy-5alpha-androstan-3-one. At Tyr891 the chain carries Phosphotyrosine; by CSK.

This sequence belongs to the nuclear hormone receptor family. NR3 subfamily. As to quaternary structure, binds DNA as a homodimer. Part of a ternary complex containing AR, EFCAB6/DJBP and PARK7. Interacts with HIPK3 and NR0B2 in the presence of androgen. The ligand binding domain interacts with KAT7/HBO1 in the presence of dihydrotestosterone. Interacts with EFCAB6/DJBP, PQBP1, RANBP9, RBAK, SPDEF, SRA1, TGFB1I1 and RREB1. Interacts with ZMIZ1/ZIMP10 and ZMIZ2/ZMIP7 which both enhance its transactivation activity. Interacts with SLC30A9 and RAD54L2/ARIP4. Interacts with MACROD1 (via macro domain). Interacts via the ligand-binding domain with LXXLL and FXXLF motifs from NCOA1, NCOA2, NCOA3 and MAGEA11. Interacts (via nuclear receptor DNA binding domain and nuclear receptor ligand binding domain) with NCOA4. The AR N-terminal poly-Gln region binds Ran resulting in enhancement of AR-mediated transactivation. Ran-binding decreases as the poly-Gln length increases. Interacts with HIP1 (via coiled coil domain). Interacts (via ligand-binding domain) with TRIM68. Interacts with TNK2. Interacts with USP26. Interacts with RNF6. Interacts (regulated by RNF6 probably through polyubiquitination) with RNF14; regulates AR transcriptional activity. Interacts with PRMT2 and TRIM24. Interacts with RACK1. Interacts with RANBP10; this interaction enhances dihydrotestosterone-induced AR transcriptional activity. Interacts with PRPF6 in a hormone-independent way; this interaction enhances dihydrotestosterone-induced AR transcriptional activity. Interacts with STK4/MST1. Interacts with ZIPK/DAPK3. Interacts with LPXN. Interacts with MAK. Part of a complex containing AR, MAK and NCOA3. Interacts with CRY1. Interacts with CCAR1 and GATA2. Interacts with ZNF318. Interacts with BUD31. Interacts with ARID4A. Interacts with ARID4B. Interacts (via NR LBD domain) with ZBTB7A; the interaction is direct and androgen-dependent. Interacts with NCOR1. Interacts with NCOR2. Interacts with CRY2 in a ligand-dependent manner. Post-translationally, phosphorylated in prostate cancer cells in response to several growth factors including EGF. Phosphorylation is induced by c-Src kinase (CSK). Tyr-510 is one of the major phosphorylation sites and an increase in phosphorylation and Src kinase activity is associated with prostate cancer progression. Phosphorylation by TNK2 enhances the DNA-binding and transcriptional activity. Phosphorylation at Ser-65 by CDK9 regulates AR promoter selectivity and cell growth. In terms of processing, sumoylated on Lys-371 (major) and Lys-496. Ubiquitinated. Deubiquitinated by USP26. 'Lys-6' and 'Lys-27'-linked polyubiquitination by RNF6 modulates AR transcriptional activity and specificity. Palmitoylated by ZDHHC7 and ZDHHC21. Palmitoylation is required for plasma membrane targeting and for rapid intracellular signaling via ERK and AKT kinases and cAMP generation.

The protein resides in the nucleus. The protein localises to the cytoplasm. Steroid hormone receptors are ligand-activated transcription factors that regulate eukaryotic gene expression and affect cellular proliferation and differentiation in target tissues. Transcription factor activity is modulated by bound coactivator and corepressor proteins like ZBTB7A that recruits NCOR1 and NCOR2 to the androgen response elements/ARE on target genes, negatively regulating androgen receptor signaling and androgen-induced cell proliferation. Transcription activation is also down-regulated by NR0B2. Activated, but not phosphorylated, by HIPK3 and ZIPK/DAPK3. The sequence is that of Androgen receptor (AR) from Macaca fascicularis (Crab-eating macaque).